The chain runs to 391 residues: Aminoacetone oxidase (391 aa).

FAD is bound by residues Ala-14, Glu-33, Ile-134, Glu-362, Asn-374, and Ile-375.

This sequence belongs to the BaiN/RdsA family. Monomer. FAD is required as a cofactor.

Functionally, flavoprotein that probably catalyzes the condensation of two molecules of aminoacetone to yield 3,6-dimethyl-2,5-dihydropyrazine, which is subsequently oxidized to 2,5-dimethylpyrazine. It could be involved in a microbial defense mechanism related to aminoacetone catabolism through a pathway yielding dimethylpyrazine derivatives instead of methylglyoxal. It has also low aminoacetone oxidase activity, and can produce hydrogen peroxide from aminoacetone. In addition, it shows very low L-amino acid oxidase activity, and can produce hydrogen peroxide from peptone and from seven amino acids, L-aspartate, L-tryptophan, L-lysine, L-isoleucine, L-arginine, L-asparagine and L-glutamine. It cannot use L-malate, oxaloacetate or alpha-aminobutyrate. Plays a role in antioxidant defense. The chain is Aminoacetone oxidase from Streptococcus cristatus.